The following is a 529-amino-acid chain: T-complex protein 1 subunit beta (529 aa).

Belongs to the TCP-1 chaperonin family. Heterooligomeric complex of about 850 to 900 kDa that forms two stacked rings, 12 to 16 nm in diameter.

The protein resides in the cytoplasm. In terms of biological role, molecular chaperone; assists the folding of proteins upon ATP hydrolysis. Known to play a role, in vitro, in the folding of actin and tubulin. This is T-complex protein 1 subunit beta (cct-2) from Caenorhabditis elegans.